The chain runs to 256 residues: Enolase-phosphatase E1 (256 aa).

Residues aspartate 14 and glutamate 16 each contribute to the Mg(2+) site. Residues 142 to 143 (SS) and lysine 176 each bind substrate. Aspartate 201 lines the Mg(2+) pocket.

This sequence belongs to the HAD-like hydrolase superfamily. MasA/MtnC family. In terms of assembly, monomer. Requires Mg(2+) as cofactor.

The protein localises to the cytoplasm. It is found in the nucleus. It carries out the reaction 5-methylsulfanyl-2,3-dioxopentyl phosphate + H2O = 1,2-dihydroxy-5-(methylsulfanyl)pent-1-en-3-one + phosphate. It participates in amino-acid biosynthesis; L-methionine biosynthesis via salvage pathway; L-methionine from S-methyl-5-thio-alpha-D-ribose 1-phosphate: step 3/6. Its pathway is amino-acid biosynthesis; L-methionine biosynthesis via salvage pathway; L-methionine from S-methyl-5-thio-alpha-D-ribose 1-phosphate: step 4/6. Functionally, bifunctional enzyme that catalyzes the enolization of 2,3-diketo-5-methylthiopentyl-1-phosphate (DK-MTP-1-P) into the intermediate 2-hydroxy-3-keto-5-methylthiopentenyl-1-phosphate (HK-MTPenyl-1-P), which is then dephosphorylated to form the acireductone 1,2-dihydroxy-3-keto-5-methylthiopentene (DHK-MTPene). This is Enolase-phosphatase E1 from Drosophila sechellia (Fruit fly).